The chain runs to 443 residues: Thymidine phosphorylase (443 aa).

The protein belongs to the thymidine/pyrimidine-nucleoside phosphorylase family. In terms of assembly, homodimer.

It carries out the reaction thymidine + phosphate = 2-deoxy-alpha-D-ribose 1-phosphate + thymine. Its pathway is pyrimidine metabolism; dTMP biosynthesis via salvage pathway; dTMP from thymine: step 1/2. The enzymes which catalyze the reversible phosphorolysis of pyrimidine nucleosides are involved in the degradation of these compounds and in their utilization as carbon and energy sources, or in the rescue of pyrimidine bases for nucleotide synthesis. In Shewanella piezotolerans (strain WP3 / JCM 13877), this protein is Thymidine phosphorylase.